We begin with the raw amino-acid sequence, 738 residues long: Phosphoribosylformylglycinamidine synthase subunit PurL (738 aa).

H53 is an active-site residue. ATP contacts are provided by Y56 and K95. Residue E97 participates in Mg(2+) binding. Substrate-binding positions include 98 to 101 (SHNH) and R120. H99 serves as the catalytic Proton acceptor. D121 lines the Mg(2+) pocket. Q244 is a binding site for substrate. Residue D274 coordinates Mg(2+). 318–320 (ESQ) provides a ligand contact to substrate. Residues D499 and G536 each coordinate ATP. N537 contributes to the Mg(2+) binding site. S539 contributes to the substrate binding site.

Belongs to the FGAMS family. In terms of assembly, monomer. Part of the FGAM synthase complex composed of 1 PurL, 1 PurQ and 2 PurS subunits.

It is found in the cytoplasm. The catalysed reaction is N(2)-formyl-N(1)-(5-phospho-beta-D-ribosyl)glycinamide + L-glutamine + ATP + H2O = 2-formamido-N(1)-(5-O-phospho-beta-D-ribosyl)acetamidine + L-glutamate + ADP + phosphate + H(+). Its pathway is purine metabolism; IMP biosynthesis via de novo pathway; 5-amino-1-(5-phospho-D-ribosyl)imidazole from N(2)-formyl-N(1)-(5-phospho-D-ribosyl)glycinamide: step 1/2. Part of the phosphoribosylformylglycinamidine synthase complex involved in the purines biosynthetic pathway. Catalyzes the ATP-dependent conversion of formylglycinamide ribonucleotide (FGAR) and glutamine to yield formylglycinamidine ribonucleotide (FGAM) and glutamate. The FGAM synthase complex is composed of three subunits. PurQ produces an ammonia molecule by converting glutamine to glutamate. PurL transfers the ammonia molecule to FGAR to form FGAM in an ATP-dependent manner. PurS interacts with PurQ and PurL and is thought to assist in the transfer of the ammonia molecule from PurQ to PurL. This Leuconostoc mesenteroides subsp. mesenteroides (strain ATCC 8293 / DSM 20343 / BCRC 11652 / CCM 1803 / JCM 6124 / NCDO 523 / NBRC 100496 / NCIMB 8023 / NCTC 12954 / NRRL B-1118 / 37Y) protein is Phosphoribosylformylglycinamidine synthase subunit PurL.